We begin with the raw amino-acid sequence, 526 residues long: Organic cation/carnitine transporter 4 (526 aa).

Residues 1-52 (MESPEDRNGNDVRQPLLEKIPVKKEAEGEERLCIDEMLQRYCGEFGRWQLKH) are Cytoplasmic-facing. The chain crosses the membrane as a helical span at residues 53–73 (FVLTCIAWALEAFHTMVMIFA). At 74-123 (DQEPEWRCVGSDCRVGSLNCELDPSSWEWTAGKGSSTVSEWGLICGDKYK) the chain is on the extracellular side. A helical transmembrane segment spans residues 124–144 (VGLVQALFFAGCMIGAGVFGH). Residues 145 to 153 (LSDSKLGRK) are Cytoplasmic-facing. Residues 154–174 (GSLTVVCIINAIFGIATAFSP) form a helical membrane-spanning segment. Topologically, residues 175 to 179 (NYWTY) are extracellular. A helical transmembrane segment spans residues 180–200 (VVLRFLTGFSTGGVGLTAFVL). Residue 201 to 208 (ATEPIGPS) participates in ATP binding. Topologically, residues 201–214 (ATEPIGPSKRGVAG) are cytoplasmic. The chain crosses the membrane as a helical span at residues 215-235 (MSTFYFFSAGIAVLSGIAYVF). Residues 236–240 (RSWRE) lie on the Extracellular side of the membrane. Residues 241-261 (LFIVSSLPSLLFLLIVIPFIS) form a helical membrane-spanning segment. The Cytoplasmic portion of the chain corresponds to 262–331 (ESPRWYLVRG…ILSPLMRMRL (70 aa)). The chain crosses the membrane as a helical span at residues 332-352 (VISVAISFTVSIVYYGLSLNV). Topologically, residues 353-360 (GNLKTNLY) are extracellular. Residues 361–381 (LNVFVNAVSEMPAFAITAVLL) traverse the membrane as a helical segment. The Cytoplasmic segment spans residues 382 to 390 (DKYGRKPLS). Residues 391–411 (IGTQWFSCVFCLVGFSVWGAG) traverse the membrane as a helical segment. At 412–418 (PWKSVRM) the chain is on the extracellular side. Residues 419-439 (VSGVLGIFGMAGTYNLLFIYI) form a helical membrane-spanning segment. Residues 440 to 451 (AELFPTVVRNAA) are Cytoplasmic-facing. The helical transmembrane segment at 452–472 (LGCATQAAQMGAILAPFVVVL) threads the bilayer. Residues 473 to 475 (GEE) are Extracellular-facing. The helical transmembrane segment at 476–496 (LPFGVFAVCGLVGGGLAFYLP) threads the bilayer. Over 497–526 (ETLNKPLYDTMFGMHEAESESNRERGEVIC) the chain is Cytoplasmic.

This sequence belongs to the major facilitator (TC 2.A.1) superfamily. Organic cation transporter (TC 2.A.1.19) family. In terms of tissue distribution, mostly expressed in siliques, and, to a lower extent, in stems, leaves, flowers and siliques. Present in pollen. In the stems of secondary inflorescences present in the phloem cells and xylem parenchyma cells.

The protein localises to the vacuole membrane. High affinity carnitine transporter involved in the active cellular uptake of carnitine. Also transports organic cations. This chain is Organic cation/carnitine transporter 4 (OCT4), found in Arabidopsis thaliana (Mouse-ear cress).